Consider the following 441-residue polypeptide: Probable tRNA pseudouridine synthase D (441 aa).

D89 functions as the Nucleophile in the catalytic mechanism. The TRUD domain occupies 168-393 (GVPNFFGVQR…SKGTRREVLL (226 aa)).

This sequence belongs to the pseudouridine synthase TruD family.

It carries out the reaction uridine(13) in tRNA = pseudouridine(13) in tRNA. Its function is as follows. Could be responsible for synthesis of pseudouridine from uracil-13 in transfer RNAs. In Methanosarcina acetivorans (strain ATCC 35395 / DSM 2834 / JCM 12185 / C2A), this protein is Probable tRNA pseudouridine synthase D.